The following is a 422-amino-acid chain: Beclin-1-like protein (422 aa).

A coiled-coil region spans residues 119–243 (MLEIMDRELR…KQQLDKLRDT (125 aa)). Residues 182–201 (QSLNDAIAEEEQEREELHEQ) form a disordered region.

The protein belongs to the beclin family. In terms of assembly, interacts with Rab18, preferentially binding to the GTP-bound form.

Plays a central role in autophagy. This is Beclin-1-like protein from Drosophila melanogaster (Fruit fly).